A 566-amino-acid polypeptide reads, in one-letter code: Autophagy-related protein 22-1 (566 aa).

A helical membrane pass occupies residues 38–58; that stretch reads YPIAAEVFAVVAVGAFLPVIL. Asn-103 is a glycosylation site (N-linked (GlcNAc...) asparagine). The next 3 helical transmembrane spans lie at 110–130, 146–168, and 179–199; these read SFAM…LVCF, AFAY…VYFL, and SLGC…ANHA. Asn-200 carries an N-linked (GlcNAc...) asparagine glycan. The next 8 membrane-spanning stretches (helical) occupy residues 242–262, 278–298, 351–371, 382–402, 416–436, 451–471, 488–510, and 519–539; these read GYGY…LWLF, VILL…LLWL, FLIS…TAVL, IAIA…AFAW, ILLC…LGFI, WEIY…SSYA, FALY…GWLV, and AFIF…MLDV. The disordered stretch occupies residues 547–566; the sequence is KAMADGEGRGRGTYERVREE.

The protein belongs to the ATG22 family.

The protein localises to the vacuole membrane. Vacuolar effluxer which mediate the efflux of amino acids resulting from autophagic degradation. The release of autophagic amino acids allows the maintenance of protein synthesis and viability during nitrogen starvation. The sequence is that of Autophagy-related protein 22-1 (ATG22-1) from Phaeosphaeria nodorum (strain SN15 / ATCC MYA-4574 / FGSC 10173) (Glume blotch fungus).